Here is a 542-residue protein sequence, read N- to C-terminus: Protein NODULATION SIGNALING PATHWAY 1 (542 aa).

The tract at residues 73-150 (TSTTSLEPCG…SNCNSGNSKE (78 aa)) is disordered. The segment covering 92–103 (LPKKRNATDESS) has biased composition (basic and acidic residues). A compositionally biased stretch (low complexity) spans 136-148 (AKANGSNCNSGNS). Positions 145 to 532 (SGNSKEGRWA…QPVSFCSLWK (388 aa)) constitute a GRAS domain. The segment at 152–214 (RWAEQLLNPC…HLSSSSSSPT (63 aa)) is leucine repeat I (LRI). The VHIID stretch occupies residues 233–332 (LLKFYEVSPW…GYNYYPRLLG (100 aa)). The short motif at 269-273 (LHILD) is the VHIID element. The interval 333–357 (YAQSININLQINRIENHSLQTLNAQ) is leucine repeat II (LRII). Positions 367–452 (LIVCAQFRLH…RESDERRVME (86 aa)) are PFYRE. An SAW region spans residues 455 to 532 (AAKALTNQRE…QPVSFCSLWK (78 aa)).

This sequence belongs to the GRAS family. As to expression, highly expressed in roots.

The protein localises to the nucleus. Transcriptional regulator essential for Nod-factor-induced gene expression. Acts downstream of calcium spiking and a calcium/calmodulin-dependent protein kinase required for activation of early nodulation gene expression. Acts as a common symbiosis gene that positively contributes to the early steps of the arbuscular mycorrhizal fungus and rhizobial infection processes in roots. Transcription factor involved in the positive regulation of the beta-carotene isomerase D27, which participates in a pathway leading to biosynthesis of strigolactones in roots. The sequence is that of Protein NODULATION SIGNALING PATHWAY 1 from Lotus japonicus (Lotus corniculatus var. japonicus).